The chain runs to 251 residues: Haloacid dehalogenase-like hydrolase domain-containing protein 3 (251 aa).

Lys-15 is modified (N6-acetyllysine; alternate). Position 15 is an N6-succinyllysine; alternate (Lys-15).

This sequence belongs to the HAD-like hydrolase superfamily.

The sequence is that of Haloacid dehalogenase-like hydrolase domain-containing protein 3 (HDHD3) from Homo sapiens (Human).